A 1100-amino-acid polypeptide reads, in one-letter code: MAEQTQLAPAAFHLPDLVAIQRNSFRWFLEEGLIEELESFSPITDYTGKLELHFLGKQYKLKRPKYDVDEAKRRDGTYSVQMYVPTRLINKETGEIKEQEVFIGDLPLMTDRGTFIINGAERVIVNQIVRSPGVYYKSERDKNGRLTHNASLIPNRGAWLKFETDKNGLVWVRIDKTRKLSAQVLLKALGLSDNEIYDKLRHPEYYQKTIDKEGQFSEDEALMELYRKLRPGEPPTVSGGQQLLESRFFDPKRYDLGRVGRYKLNKKLGLNVADTVRTLTSEDILAAIDYLINLELDLGGCEVDDIDHLGNRRVRSVGELLQNQVRVGLNRLERIIRERMTVSDSDSLSPASLVNPKPLVAAIKEFFGSSQLSQFMDQTNPLAELTHKRRLSALGPGGLTRERAGFAVRDIHPSHYGRICPIETPEGPNAGLIGSLATHARVNDYGFIETPFWRVEEGRVRKDLAPVYMTADQEDDLRVAPGDVATDDAGYILGTTIPVRYRQDFTTTTPERVDYVALSPVQIISVATSLIPFLEHDDANRALMGSNMQRQAVPLLRPERPLVGTGLEPQAARDSGMVITSPVDGTISYVDATHIEVTADTGEKYGYALQKYQRSNQDTCLNQRPIVFEGDRVQRGQVIADGSATEKGELALGQNILVAYMPWEGYNYEDAILISERLVYDDVYTSIHIEKFEIEARQTKLGPEEITREIPNVGEDALRQLDENGIIRVGAWVESGDILVGKVTPKGESDQPPEEKLLRAIFGEKARDVRDNSLRVPNGEKGRVVDVRLFTREQGDELPPGANMVVRVYVAQKRKIQVGDKMAGRHGNKGIISRILPCEDMPYLPDGTPLDIVLNPLGVPSRMNVGQVFECMLGWAGQLLDARFKVTPFDEMYGAEASRLTVNAKLSEAREQTGQPWVFSDDEPGKIQVYDGRTGEPFDRPVTVGRAYMLKLVHLVDDKIHARSTGPYSLVTQQPLGGKAQQGGQRFGEMEVWALEAYGAAYILQELLTVKSDDMQGRNEALNAIVKGKAIPRPGTPESFKVLMRELQSLCLDIAVYKASTEDYEEDKEVDLMADVNQRRTPSRPTYESMSVGDIDDDDD.

Positions 1064 to 1100 (YEEDKEVDLMADVNQRRTPSRPTYESMSVGDIDDDDD) are disordered. Residues 1079–1089 (RRTPSRPTYES) are compositionally biased toward polar residues.

The protein belongs to the RNA polymerase beta chain family. As to quaternary structure, in cyanobacteria the RNAP catalytic core is composed of 2 alpha, 1 beta, 1 beta', 1 gamma and 1 omega subunit. When a sigma factor is associated with the core the holoenzyme is formed, which can initiate transcription.

The catalysed reaction is RNA(n) + a ribonucleoside 5'-triphosphate = RNA(n+1) + diphosphate. Functionally, DNA-dependent RNA polymerase catalyzes the transcription of DNA into RNA using the four ribonucleoside triphosphates as substrates. This is DNA-directed RNA polymerase subunit beta from Synechococcus elongatus (strain ATCC 33912 / PCC 7942 / FACHB-805) (Anacystis nidulans R2).